Here is a 541-residue protein sequence, read N- to C-terminus: Testis-specific chromodomain protein Y 2 (541 aa).

The region spanning 6 to 66 (FEVEAIVDKR…RQTEKQKKLT (61 aa)) is the Chromo domain. The disordered stretch occupies residues 72–104 (RIFSNNARRRTSRSTKANYSKNSPKTPVTDKHH). The span at 87-97 (KANYSKNSPKT) shows a compositional bias: polar residues.

Testis specific.

Its subcellular location is the nucleus. It carries out the reaction L-lysyl-[protein] + acetyl-CoA = N(6)-acetyl-L-lysyl-[protein] + CoA + H(+). May have histone acetyltransferase activity. The sequence is that of Testis-specific chromodomain protein Y 2 (CDY2A) from Homo sapiens (Human).